We begin with the raw amino-acid sequence, 240 residues long: Ubiquinone biosynthesis O-methyltransferase (240 aa).

S-adenosyl-L-methionine is bound by residues arginine 44, glycine 64, aspartate 85, and methionine 129.

This sequence belongs to the methyltransferase superfamily. UbiG/COQ3 family.

The catalysed reaction is a 3-demethylubiquinol + S-adenosyl-L-methionine = a ubiquinol + S-adenosyl-L-homocysteine + H(+). It catalyses the reaction a 3-(all-trans-polyprenyl)benzene-1,2-diol + S-adenosyl-L-methionine = a 2-methoxy-6-(all-trans-polyprenyl)phenol + S-adenosyl-L-homocysteine + H(+). Its pathway is cofactor biosynthesis; ubiquinone biosynthesis. O-methyltransferase that catalyzes the 2 O-methylation steps in the ubiquinone biosynthetic pathway. The polypeptide is Ubiquinone biosynthesis O-methyltransferase (Escherichia coli O8 (strain IAI1)).